The following is a 341-amino-acid chain: tRNA N6-adenosine threonylcarbamoyltransferase (341 aa).

Residues histidine 115 and histidine 119 each coordinate Fe cation. Substrate-binding positions include 138-142, aspartate 171, glycine 184, and asparagine 276; that span reads LVSGG. A Fe cation-binding site is contributed by aspartate 304.

This sequence belongs to the KAE1 / TsaD family. Requires Fe(2+) as cofactor.

Its subcellular location is the cytoplasm. It carries out the reaction L-threonylcarbamoyladenylate + adenosine(37) in tRNA = N(6)-L-threonylcarbamoyladenosine(37) in tRNA + AMP + H(+). Its function is as follows. Required for the formation of a threonylcarbamoyl group on adenosine at position 37 (t(6)A37) in tRNAs that read codons beginning with adenine. Is involved in the transfer of the threonylcarbamoyl moiety of threonylcarbamoyl-AMP (TC-AMP) to the N6 group of A37, together with TsaE and TsaB. TsaD likely plays a direct catalytic role in this reaction. This is tRNA N6-adenosine threonylcarbamoyltransferase from Stenotrophomonas maltophilia (strain K279a).